The sequence spans 491 residues: Nucleoside transporter 1.2 (491 aa).

Helical transmembrane passes span 27–47 (FYVY…VNAV), 82–102 (YNLI…LSWF), 109–129 (VRLL…MVVP), 136–156 (AGAV…KSIF), 173–193 (STMM…QIIV), and 209–229 (KIYY…LILL). A compositionally biased stretch (basic and acidic residues) spans 261–273 (HTDEHPTHDKEGR). Disordered stretches follow at residues 261-280 (HTDE…SGKE) and 290-309 (AAAK…PHEV). N-linked (GlcNAc...) asparagine glycosylation is present at asparagine 274. 5 helical membrane passes run 333-353 (MFVA…GIAV), 361-381 (WFST…RFSP), 395-415 (WIIV…LLHS), 427-447 (VMEV…LVLG), and 460-480 (FVAG…GTVL).

Belongs to the SLC29A/ENT transporter (TC 2.A.57) family.

It is found in the membrane. The enzyme catalyses adenosine(in) + H(+)(in) = adenosine(out) + H(+)(out). It carries out the reaction uridine(in) + H(+)(in) = uridine(out) + H(+)(out). In terms of biological role, sodium-independent nucleoside:H(+) symporter; transports adenosine with high affinity and uridine with moderate affinity. Can transport cytidine and thymidine. The sequence is that of Nucleoside transporter 1.2 from Leishmania donovani.